The sequence spans 322 residues: MLPFNSCVYVLLIISLMSNCRALCRATALQGRSLCATGGPDAAFRAEHERLSAFESRPSSGSYDMRRALDPIEIETWFHIVSGETDADLVTDEMVILQLHYLQKAYEKASISYRLKGVTRHINETWARNGDDSAMKKALRRGGYSTLNVYFQTNLQPPSTTDFARWTSDGDNRHAYNSDLAPPSVLGFCTLPDPSINSSSPRSSYSKDGCNVLAKTMPGGPMTHYNRGGTAIHEIGHWNGLLHTFEGESCSEDNAGDYIADTPQQSVPTDGCPSQKDSCPDSPGLDDIHNFMDYSSDDCYASFTSNQLKRMRDMWFSMRKGK.

The first 22 residues, 1 to 22 (MLPFNSCVYVLLIISLMSNCRA), serve as a signal peptide directing secretion. Asn-123 and Asn-197 each carry an N-linked (GlcNAc...) asparagine glycan. Residue His-233 coordinates Zn(2+). The active site involves Glu-234. His-237 is a binding site for Zn(2+). The cysteines at positions 272 and 299 are disulfide-linked.

Belongs to the peptidase M43B family.

It localises to the secreted. Its function is as follows. Secreted metalloproteinase that allows assimilation of proteinaceous substrates. Plays a pivotal role as a pathogenicity determinant during infections and contributes to the ability of the pathogen to persist within the mammalian host. This is Extracellular metalloprotease AFUB_008060 from Aspergillus fumigatus (strain CBS 144.89 / FGSC A1163 / CEA10) (Neosartorya fumigata).